Here is a 266-residue protein sequence, read N- to C-terminus: Glutamate racemase (266 aa).

Residues 9-10 (DS) and 41-42 (YG) contribute to the substrate site. The active-site Proton donor/acceptor is cysteine 72. A substrate-binding site is contributed by 73–74 (NT). The active-site Proton donor/acceptor is the cysteine 184. 185-186 (TH) contributes to the substrate binding site.

Belongs to the aspartate/glutamate racemases family.

It catalyses the reaction L-glutamate = D-glutamate. The protein operates within cell wall biogenesis; peptidoglycan biosynthesis. Provides the (R)-glutamate required for cell wall biosynthesis. In Staphylococcus haemolyticus, this protein is Glutamate racemase.